The chain runs to 1386 residues: DNA-directed RNA polymerase subunit beta (1386 aa).

This sequence belongs to the RNA polymerase beta chain family. In plastids the minimal PEP RNA polymerase catalytic core is composed of four subunits: alpha, beta, beta', and beta''. When a (nuclear-encoded) sigma factor is associated with the core the holoenzyme is formed, which can initiate transcription.

It is found in the plastid. The protein resides in the chloroplast. It carries out the reaction RNA(n) + a ribonucleoside 5'-triphosphate = RNA(n+1) + diphosphate. In terms of biological role, DNA-dependent RNA polymerase catalyzes the transcription of DNA into RNA using the four ribonucleoside triphosphates as substrates. This Thalassiosira pseudonana (Marine diatom) protein is DNA-directed RNA polymerase subunit beta.